Here is a 438-residue protein sequence, read N- to C-terminus: Cyanidin-3-O-glucoside 2-O-glucuronosyltransferase (438 aa).

UDP-alpha-D-glucuronate is bound by residues Ser264, 315 to 316, 333 to 341, and 355 to 358; these read WV, HCGWSSTME, and QFDQ.

The protein belongs to the UDP-glycosyltransferase family. In terms of assembly, monomer. As to expression, expressed in petals. Not detected in sepals, stems, leaves, tubular corollas and white petals.

The protein localises to the cytoplasm. The catalysed reaction is cyanidin 3-O-beta-D-glucoside + UDP-alpha-D-glucuronate = cyanidin 3-O-(2-O-beta-D-glucuronosyl)-beta-D-glucoside + UDP + H(+). Its activity is regulated as follows. Inhibited by copper, mercury, UDP, UTP and partially by calcium, cadmium, iron and UMP. Not affected by cobalt, magnesium, manganese, zinc, nickel, tin, uridine, sadium malonate and glucose. Its function is as follows. Involved in the production of glucuronosylated anthocyanins that are the origin of the red coloration of flowers. Can use cyanidin 3-O-6''-O-malonylglucoside, cyanidin 3-O-glucoside and delphinidin 3-O-glucosideas substrates, but not pelargonidin 3-O-glucoside, cyanidin 3-O-3'',6''-O-dimalonylglucoside, pelargonidin 3,5-O-diglucoside, pelargonidin 3-O-6''-O-malonylglucoside-5-O-glucoside, quercetin 3-O-glucoside, quercetin 3-O-6''-O-malonylglucoside, daidzin, genistin,7-O-6''-O-malonylglucosides of daidzein and genistein, cyanidin, quercetin, daidzein, genistein p-Nitrophenyl beta-D-glucopyranoside, beta-estradiol, 17alpha-estradiol, 1-naphthol, 2-naphthol, 4-methylumbelliferone, and p-nitrophenol. Highly specific for UDP-glucuronate (UDP-GlcUA). Arg-25 is decisive with respect to UDP-sugar specificity. This Bellis perennis (English daisy) protein is Cyanidin-3-O-glucoside 2-O-glucuronosyltransferase (UGAT).